A 245-amino-acid polypeptide reads, in one-letter code: 1-(5-phosphoribosyl)-5-[(5-phosphoribosylamino)methylideneamino] imidazole-4-carboxamide isomerase (245 aa).

Aspartate 7 acts as the Proton acceptor in catalysis. Aspartate 129 (proton donor) is an active-site residue.

The protein belongs to the HisA/HisF family.

It is found in the cytoplasm. The enzyme catalyses 1-(5-phospho-beta-D-ribosyl)-5-[(5-phospho-beta-D-ribosylamino)methylideneamino]imidazole-4-carboxamide = 5-[(5-phospho-1-deoxy-D-ribulos-1-ylimino)methylamino]-1-(5-phospho-beta-D-ribosyl)imidazole-4-carboxamide. It functions in the pathway amino-acid biosynthesis; L-histidine biosynthesis; L-histidine from 5-phospho-alpha-D-ribose 1-diphosphate: step 4/9. This Shewanella halifaxensis (strain HAW-EB4) protein is 1-(5-phosphoribosyl)-5-[(5-phosphoribosylamino)methylideneamino] imidazole-4-carboxamide isomerase.